Consider the following 148-residue polypeptide: Small ribosomal subunit protein bS16 (148 aa).

Residues 106–148 form a disordered region; the sequence is QAAARAAAGAEDRPATTPKKAKKSGSAEEAEAAPATDAPAAGQ. A compositionally biased stretch (low complexity) spans 137–148; the sequence is AAPATDAPAAGQ.

This sequence belongs to the bacterial ribosomal protein bS16 family.

This chain is Small ribosomal subunit protein bS16, found in Frankia casuarinae (strain DSM 45818 / CECT 9043 / HFP020203 / CcI3).